The primary structure comprises 906 residues: Protein translocase subunit SecA (906 aa).

Residues Gln89, 107 to 111, and Asp502 each bind ATP; that span reads GEGKT. The tract at residues 868–887 is disordered; the sequence is VPPAQRDPADPRTWGKVSRN. 4 residues coordinate Zn(2+): Cys890, Cys892, Cys901, and His902.

The protein belongs to the SecA family. As to quaternary structure, monomer and homodimer. Part of the essential Sec protein translocation apparatus which comprises SecA, SecYEG and auxiliary proteins SecDF-YajC and YidC. Requires Zn(2+) as cofactor.

The protein resides in the cell inner membrane. The protein localises to the cytoplasm. The enzyme catalyses ATP + H2O + cellular proteinSide 1 = ADP + phosphate + cellular proteinSide 2.. Its function is as follows. Part of the Sec protein translocase complex. Interacts with the SecYEG preprotein conducting channel. Has a central role in coupling the hydrolysis of ATP to the transfer of proteins into and across the cell membrane, serving both as a receptor for the preprotein-SecB complex and as an ATP-driven molecular motor driving the stepwise translocation of polypeptide chains across the membrane. The chain is Protein translocase subunit SecA from Brucella abortus (strain S19).